We begin with the raw amino-acid sequence, 198 residues long: Elongation factor Ts (198 aa).

Residues 81–84 (TDFV) form an involved in Mg(2+) ion dislocation from EF-Tu region.

The protein belongs to the EF-Ts family.

The protein resides in the cytoplasm. In terms of biological role, associates with the EF-Tu.GDP complex and induces the exchange of GDP to GTP. It remains bound to the aminoacyl-tRNA.EF-Tu.GTP complex up to the GTP hydrolysis stage on the ribosome. The chain is Elongation factor Ts from Herpetosiphon aurantiacus (strain ATCC 23779 / DSM 785 / 114-95).